A 466-amino-acid polypeptide reads, in one-letter code: MVSQALRLLCLLLGLQGCLAAGGVAEASGGETRDMPWKPGPHRVFITQEEAHGVLHRRRRANAFLEELRPGSLERECKEEQCSFEEAREIFKDLERTKLFWISYSDGDQCASSPCQNGGSCKDQLQSYICFCLPAFEGRNCETYKDDQLICVNENGGCEQYCSDHTGTKRSCRCHEGYSLLADGVSCTPTVEYPCGKIPILENRNASKPQGRIVGGKVCPKGECPWQXLLXVNGAQLCGGTLINTIWVASAAHCFDKIKNWRNLIAVLGEHDLSEHDGDEQSRRVAQVIIPSTYIPGTTNHDIALLRLHQPVVLTDHVVPLCLPERAFSERTLAFVRFSLVSGWGQLLDRGATALELMVLNVPRLMTQDCLQQSRKVGDSPNITEYMFCAGYSDGSKDSCKGDSGGPHATHYRGTWYLTGIVSWGQGCASVGHFGVYTRVSQYIEWLQKLMRSEPRPGVLLRAPFP.

A signal peptide spans 1-20 (MVSQALRLLCLLLGLQGCLA). Positions 21–60 (AGGVAEASGGETRDMPWKPGPHRVFITQEEAHGVLHRRRR) are excised as a propeptide. One can recognise a Gla domain in the interval 61 to 105 (ANAFLEELRPGSLERECKEEQCSFEEAREIFKDLERTKLFWISYS). 4-carboxyglutamate occurs at positions 66, 67, 74, 76, 79, 80, 85, 86, 89, and 95. Cys77 and Cys82 are disulfide-bonded. The region spanning 106–142 (DGDQCASSPCQNGGSCKDQLQSYICFCLPAFEGRNCE) is the EGF-like 1; calcium-binding domain. Cystine bridges form between Cys110–Cys121, Cys115–Cys130, Cys132–Cys141, Cys151–Cys162, Cys158–Cys172, Cys174–Cys187, Cys195–Cys322, Cys219–Cys224, Cys238–Cys254, and Cys370–Cys389. O-linked (Glc...) serine; alternate glycosylation is present at Ser112. An O-linked (Xyl...) serine; alternate glycan is attached at Ser112. O-linked (Fuc) serine glycosylation occurs at Ser120. The residue at position 123 (Asp123) is a (3R)-3-hydroxyaspartate. An EGF-like 2 domain is found at 147–188 (DQLICVNENGGCEQYCSDHTGTKRSCRCHEGYSLLADGVSCT). N-linked (GlcNAc...) asparagine glycosylation is present at Asn205. The 240-residue stretch at 213 to 452 (IVGGKVCPKG…YIEWLQKLMR (240 aa)) folds into the Peptidase S1 domain. Residues His253 and Asp302 each act as charge relay system in the active site. A glycan (N-linked (GlcNAc...) asparagine) is linked at Asn382. Position 398 (Asp398) interacts with substrate. An intrachain disulfide couples Cys400 to Cys428. Ser404 serves as the catalytic Charge relay system.

It belongs to the peptidase S1 family. Heterodimer of a light chain and a heavy chain linked by a disulfide bond. Post-translationally, the vitamin K-dependent, enzymatic carboxylation of some glutamate residues allows the modified protein to bind calcium. The iron and 2-oxoglutarate dependent 3-hydroxylation of aspartate and asparagine is (R) stereospecific within EGF domains. In terms of processing, O-glycosylated. O-fucosylated by POFUT1 on a conserved serine or threonine residue found in the consensus sequence C2-X(4,5)-[S/T]-C3 of EGF domains, where C2 and C3 are the second and third conserved cysteines. Post-translationally, can be either O-glucosylated or O-xylosylated at Ser-112 by POGLUT1.

The protein localises to the secreted. The catalysed reaction is Selective cleavage of Arg-|-Ile bond in factor X to form factor Xa.. Its function is as follows. Initiates the extrinsic pathway of blood coagulation. Serine protease that circulates in the blood in a zymogen form. Factor VII is converted to factor VIIa by factor Xa, factor XIIa, factor IXa, or thrombin by minor proteolysis. In the presence of tissue factor and calcium ions, factor VIIa then converts factor X to factor Xa by limited proteolysis. Factor VIIa also converts factor IX to factor IXa in the presence of tissue factor and calcium. This chain is Coagulation factor VII (F7), found in Pan paniscus (Pygmy chimpanzee).